The chain runs to 154 residues: Ribosome maturation factor RimP (154 aa).

The protein belongs to the RimP family.

It localises to the cytoplasm. Functionally, required for maturation of 30S ribosomal subunits. The chain is Ribosome maturation factor RimP from Yersinia pseudotuberculosis serotype O:1b (strain IP 31758).